The sequence spans 338 residues: Methionine import ATP-binding protein MetN 1 (338 aa).

The ABC transporter domain maps to 2–241; sequence IEVRSVTKRF…PHSELGVGLL (240 aa). An ATP-binding site is contributed by 38–45; it reads GQSGAGKT.

This sequence belongs to the ABC transporter superfamily. Methionine importer (TC 3.A.1.24) family. The complex is composed of two ATP-binding proteins (MetN), two transmembrane proteins (MetI) and a solute-binding protein (MetQ).

Its subcellular location is the cell membrane. The catalysed reaction is L-methionine(out) + ATP + H2O = L-methionine(in) + ADP + phosphate + H(+). The enzyme catalyses D-methionine(out) + ATP + H2O = D-methionine(in) + ADP + phosphate + H(+). In terms of biological role, part of the ABC transporter complex MetNIQ involved in methionine import. Responsible for energy coupling to the transport system. This chain is Methionine import ATP-binding protein MetN 1, found in Rhodococcus jostii (strain RHA1).